Consider the following 168-residue polypeptide: RxLR effector protein CRE8 (168 aa).

A signal peptide spans 1–23 (MRLPSILVVAASTLFLHYGYTSA). A RxLR-dEER motif is present at residues 54-69 (RFLRDGKIAEGDNEER).

The protein belongs to the RxLR effector family.

It localises to the secreted. The protein localises to the host cell. Effector that is involved in host plant infection. Contributes to virulence during the early infection stage, by inhibiting plant defense responses induced by both PAMP-triggered immunity (PTI) and effector-triggered immunity (ETI). The polypeptide is RxLR effector protein CRE8 (Phytophthora infestans (strain T30-4) (Potato late blight agent)).